The primary structure comprises 57 residues: Potassium channel toxin alpha-KTx 17.2 (57 aa).

A signal peptide spans 1-26 (MKTIIVLLLLTIVAAAVVESSPKARR). 3 disulfide bridges follow: cysteine 30–cysteine 46, cysteine 36–cysteine 51, and cysteine 40–cysteine 53.

The protein belongs to the short scorpion toxin superfamily. Potassium channel inhibitor family. Alpha-KTx 17 subfamily. Expressed by the venom gland.

Its subcellular location is the secreted. Inhibits voltage-gated potassium channels. In Lychas mucronatus (Chinese swimming scorpion), this protein is Potassium channel toxin alpha-KTx 17.2.